A 261-amino-acid polypeptide reads, in one-letter code: Lys-63-specific deubiquitinase BRCC36 (261 aa).

The 144-residue stretch at 6 to 149 (VHIQGDAFLV…YTCFQSVQAQ (144 aa)) folds into the MPN domain. Zn(2+)-binding residues include H92, H94, and D105. Residues 92–105 (HSHPHITVWPSHVD) carry the JAMM motif motif.

Belongs to the peptidase M67A family. BRCC36 subfamily. Component of the BRCA1-A complex, at least composed of brca1, bard1, uimc1/rap80, abraxas1, brcc3/brcc36, babam2 and babam1/nba1. In the BRCA1-A complex, interacts directly with abraxas1 and babam2. Component of the BRISC complex, at least composed of abraxas2, brcc3/brcc36, babam2 and babam1/nba1. Within the complex, interacts directly with abraxas2. Both the BRCA1-A complex and the BRISC complex bind polyubiquitin. Zn(2+) is required as a cofactor.

It is found in the nucleus. The protein resides in the cytoplasm. It localises to the cytoskeleton. The protein localises to the spindle pole. Functionally, metalloprotease that specifically cleaves 'Lys-63'-linked polyubiquitin chains. Does not have activity toward 'Lys-48'-linked polyubiquitin chains. Component of the BRCA1-A complex, a complex that specifically recognizes 'Lys-63'-linked ubiquitinated histones H2A and H2AX at DNA lesions sites, leading to target the brca1-bard1 heterodimer to sites of DNA damage at double-strand breaks (DSBs). In the BRCA1-A complex, it specifically removes 'Lys-63'-linked ubiquitin on histones H2A and H2AX, antagonizing the rnf8-dependent ubiquitination at double-strand breaks (DSBs). Catalytic subunit of the BRISC complex, a multiprotein complex that specifically cleaves 'Lys-63'-linked ubiquitin in various substrates. Mediates the specific 'Lys-63'-specific deubiquitination associated with the COP9 signalosome complex (CSN), via the interaction of the BRISC complex with the CSN complex. The BRISC complex is required for normal mitotic spindle assembly and microtubule attachment to kinetochores via its role in deubiquitinating numa1. Plays a role in interferon signaling via its role in the deubiquitination of the interferon receptor ifnar1; deubiquitination increases ifnar1 activity by enhancing its stability and cell surface expression. Acts as a regulator of the NLRP3 inflammasome by mediating deubiquitination of nlrp3. Down-regulates the response to bacterial lipopolysaccharide (LPS) via its role in ifnar1 deubiquitination. The chain is Lys-63-specific deubiquitinase BRCC36 (brcc3) from Xenopus tropicalis (Western clawed frog).